The sequence spans 185 residues: Elongation factor P (185 aa).

This sequence belongs to the elongation factor P family.

The protein resides in the cytoplasm. Its pathway is protein biosynthesis; polypeptide chain elongation. Involved in peptide bond synthesis. Stimulates efficient translation and peptide-bond synthesis on native or reconstituted 70S ribosomes in vitro. Probably functions indirectly by altering the affinity of the ribosome for aminoacyl-tRNA, thus increasing their reactivity as acceptors for peptidyl transferase. This Synechococcus elongatus (strain ATCC 33912 / PCC 7942 / FACHB-805) (Anacystis nidulans R2) protein is Elongation factor P (efp).